The primary structure comprises 342 residues: Keratin-associated protein 29-1 (342 aa).

Tandem repeats lie at residues 5 to 9, 91 to 95, 239 to 243, 309 to 313, and 324 to 328. The segment at 5-328 is 5 X 5 AA repeats of C-C-X(3); the sequence is CCPENPTAVP…SSGPGCCPPT (324 aa).

Belongs to the KRTAP type 10 family.

The polypeptide is Keratin-associated protein 29-1 (Krtap29-1) (Mus musculus (Mouse)).